A 513-amino-acid chain; its full sequence is Serine/threonine-protein kinase pakH (513 aa).

Residues 42 to 294 form the Protein kinase domain; the sequence is FEIQEKLGEG…PSQLLDHPFI (253 aa). ATP contacts are provided by residues 48 to 56 and Lys71; that span reads LGEGSFGSV. The active-site Proton acceptor is the Asp163. The interval 313 to 358 is disordered; sequence KSKKRKSIGPSVSPKQQPNDNNNNNNNNKPQFLSKLLNNNSNSSND. Low complexity predominate over residues 331-357; that stretch reads NDNNNNNNNNKPQFLSKLLNNNSNSSN. The helical transmembrane segment at 493–512 threads the bilayer; the sequence is IVLYSTLGLILVLSVFFKFF.

It belongs to the protein kinase superfamily. STE Ser/Thr protein kinase family. STE20 subfamily. The cofactor is Mg(2+).

The protein localises to the membrane. It catalyses the reaction L-seryl-[protein] + ATP = O-phospho-L-seryl-[protein] + ADP + H(+). The catalysed reaction is L-threonyl-[protein] + ATP = O-phospho-L-threonyl-[protein] + ADP + H(+). In Dictyostelium discoideum (Social amoeba), this protein is Serine/threonine-protein kinase pakH (pakH-1).